Here is a 619-residue protein sequence, read N- to C-terminus: Chaperone protein HscA homolog (619 aa).

Belongs to the heat shock protein 70 family.

Its function is as follows. Chaperone involved in the maturation of iron-sulfur cluster-containing proteins. Has a low intrinsic ATPase activity which is markedly stimulated by HscB. This chain is Chaperone protein HscA homolog, found in Pseudomonas aeruginosa (strain UCBPP-PA14).